The primary structure comprises 207 residues: Small ribosomal subunit protein uS4 (207 aa).

Residues 26 to 53 (KPFDVKTKKHAKAPGQHGQARGKQSEYS) are disordered. One can recognise an S4 RNA-binding domain in the interval 97-159 (SRLDNVVYRM…AKQQLRIKNA (63 aa)).

This sequence belongs to the universal ribosomal protein uS4 family. In terms of assembly, part of the 30S ribosomal subunit. Contacts protein S5. The interaction surface between S4 and S5 is involved in control of translational fidelity.

In terms of biological role, one of the primary rRNA binding proteins, it binds directly to 16S rRNA where it nucleates assembly of the body of the 30S subunit. Functionally, with S5 and S12 plays an important role in translational accuracy. The polypeptide is Small ribosomal subunit protein uS4 (Acinetobacter baylyi (strain ATCC 33305 / BD413 / ADP1)).